Consider the following 451-residue polypeptide: Glyceraldehyde-3-phosphate dehydrogenase B, chloroplastic (451 aa).

The transit peptide at 1-83 directs the protein to the chloroplast; sequence MASHAALAPS…AAPVRGETVA (83 aa). NADP(+)-binding positions include 94–95, aspartate 118, and arginine 163; that span reads RI. Residues 237–239, threonine 268, arginine 283, 296–297, and arginine 319 each bind D-glyceraldehyde 3-phosphate; these read SCT and TG. Residue cysteine 238 is the Nucleophile of the active site. NADP(+) is bound at residue asparagine 402.

This sequence belongs to the glyceraldehyde-3-phosphate dehydrogenase family. In terms of assembly, tetramer of either four A chains (GAPDH 2) or two A and two B chains (GAPDH 1).

The protein resides in the plastid. It localises to the chloroplast. It catalyses the reaction D-glyceraldehyde 3-phosphate + phosphate + NADP(+) = (2R)-3-phospho-glyceroyl phosphate + NADPH + H(+). It functions in the pathway carbohydrate biosynthesis; Calvin cycle. This chain is Glyceraldehyde-3-phosphate dehydrogenase B, chloroplastic (GAPB), found in Spinacia oleracea (Spinach).